Here is a 506-residue protein sequence, read N- to C-terminus: Gamma-aminobutyric acid receptor subunit epsilon (506 aa).

Positions 1-22 (MLSKVLPVLLGILLILQSRVEG) are cleaved as a signal peptide. The segment at 23 to 66 (PQTESKNEASSRDVVYGPQPQPLENQLLSEETKSTETETGSRVG) is disordered. The Extracellular segment spans residues 23-280 (PQTESKNEAS…FNVSRRFGYV (258 aa)). Residue N134 is glycosylated (N-linked (GlcNAc...) asparagine). An intrachain disulfide couples C195 to C209. N252 is a glycosylation site (N-linked (GlcNAc...) asparagine). A helical transmembrane segment spans residues 281–301 (AFQNYVPSSVTTMLSWVSFWI). Topologically, residues 302–307 (KTESAP) are cytoplasmic. A helical transmembrane segment spans residues 308–327 (ARTSLGITSVLTMTTLGTFS). The Extracellular segment spans residues 328–343 (RKNFPRVSYITALDFY). The helical transmembrane segment at 344–364 (IAICFVFCFCALLEFAVLNFL) threads the bilayer. At 365-485 (IYNQTKAHAS…HVYRLDNYSR (121 aa)) the chain is on the cytoplasmic side. The disordered stretch occupies residues 413-438 (EGSDGEERPSCSAQQPPSPGSPEGPR). Residues 486–506 (VVFPVTFFFFNVLYWLVCLNL) form a helical membrane-spanning segment.

It belongs to the ligand-gated ion channel (TC 1.A.9) family. Gamma-aminobutyric acid receptor (TC 1.A.9.5) subfamily. GABRE sub-subfamily. As to quaternary structure, heteropentamer, formed by a combination of alpha (GABRA1-6), beta (GABRB1-3), gamma (GABRG1-3), delta (GABRD), epsilon (GABRE), rho (GABRR1-3), pi (GABRP) and theta (GABRQ) chains, each subunit exhibiting distinct physiological and pharmacological properties. In terms of tissue distribution, expressed in many tissues. Highest levels of expression in adult heart and placenta.

It is found in the cell membrane. The protein localises to the postsynaptic cell membrane. It carries out the reaction chloride(in) = chloride(out). With respect to regulation, potentiated by pentobarbital, loreclezole, and lanthanum and inhibited by zinc and furosemide. Introduction of the epsilon subunit to the receptor complex resulted in diminished modulatory effects by etomidate, propofol, pregnanolone and flurazepam. Functionally, epsilon subunit of the heteropentameric ligand-gated chloride channel gated by gamma-aminobutyric acid (GABA), a major inhibitory neurotransmitter in the brain. GABA-gated chloride channels, also named GABA(A) receptors (GABAAR), consist of five subunits arranged around a central pore and contain GABA active binding site(s) located at the alpha and beta subunit interfaces. When activated by GABA, GABAARs selectively allow the flow of chloride anions across the cell membrane down their electrochemical gradient. GABAARs containing epsilon subunits also permit spontaneous chloride channel activity while preserving the structural information required for GABA-gated openings. GABARs containing epsilon subunit may regulate cardiac function. This chain is Gamma-aminobutyric acid receptor subunit epsilon, found in Homo sapiens (Human).